We begin with the raw amino-acid sequence, 275 residues long: MPKVFLVKRRSLGVSVRSWDELPDEKRADTYIPVGLGRLLHDPPEDCRSDGGSSSGSGSSSAGEPGGAESSSSPHAPESETPEPGDAEGPDGHLATKQRPVARSKIKFTTGTCSDSVVHSCDLCGKGFRLQRMLNRHLKCHNQVKRHLCTFCGKGFNDTFDLKRHVRTHTGIRPYKCNVCNKAFTQRCSLESHLKKIHGVQQQYAYKQRRDKLYVCEDCGYTGPTQEDLYLHVNSAHPGSSFLKKTSKKLAALLQGKLTSAHQENTSLSEEEERK.

Residues 15–101 are disordered; sequence SVRSWDELPD…GHLATKQRPV (87 aa). 2 stretches are compositionally biased toward basic and acidic residues: residues 18–29 and 39–49; these read SWDELPDEKRAD and LLHDPPEDCRS. Residues 56-76 are compositionally biased toward low complexity; sequence GSGSSSAGEPGGAESSSSPHA. Residues 80–89 show a composition bias toward acidic residues; sequence ETPEPGDAEG. 4 C2H2-type zinc fingers span residues 119–141, 147–169, 175–198, and 214–237; these read HSCD…LKCH, HLCT…VRTH, YKCN…KKIH, and YVCE…NSAH. Residue serine 269 is modified to Phosphoserine.

The protein belongs to the krueppel C2H2-type zinc-finger protein family. As to quaternary structure, interacts (via zinc-finger domains) with CEBPA (via bZIP domain); the interaction inhibits the transcription factor activity of CEBPA and is required to repress adipogenesis. As to expression, expressed in testis, ovary, heart and skeletal muscle. Expressed in the cornea, but absent from the corneal endothelium.

The protein resides in the nucleus. In terms of biological role, zinc-finger transcription repressor factor. Plays a critical role in maintaining the identity of epithelial lineages by suppressing epithelial-to mesenchymal transition (EMT) mainly through the repression of ZEB1, an EMT inducer. Positively regulates neuronal differentiation. Suppresses cell cycling and terminal differentiation of keratinocytes by directly repressing MYC and NOTCH1. Important for the correct development of primordial germ cells in embryos. Plays dual functions in thermogenesis and adipogenesis to maintain energy balance. Essential for brown/beige adipose tissue-mediated thermogenesis, is necessary for the development of brown adipocytes. In white adipose tissues, limits adipogenesis by blocking CEBPA binding to its transcriptional targets and inhibiting its transcription factor activity. The protein is Transcription factor Ovo-like 2 of Homo sapiens (Human).